The sequence spans 34 residues: Photosystem II reaction center protein Psb30 (34 aa).

The chain crosses the membrane as a helical span at residues 7–27 (VAQLLALFVIITSGPAIIILI).

It belongs to the Psb30/Ycf12 family. In terms of assembly, PSII is composed of 1 copy each of membrane proteins PsbA, PsbB, PsbC, PsbD, PsbE, PsbF, PsbH, PsbI, PsbJ, PsbK, PsbL, PsbM, PsbT, PsbX, PsbY, PsbZ, Psb30/Ycf12, peripheral proteins of the oxygen-evolving complex and a large number of cofactors. It forms dimeric complexes.

It is found in the plastid. The protein resides in the chloroplast thylakoid membrane. A core subunit of photosystem II (PSII), probably helps stabilize the reaction center. This chain is Photosystem II reaction center protein Psb30, found in Guillardia theta (Cryptophyte).